Consider the following 467-residue polypeptide: Venom prothrombin activator pseutarin-C catalytic subunit (467 aa).

The N-terminal stretch at 1 to 22 (MAPQLLLCLILTFLWSLPEAES) is a signal peptide. Positions 23 to 40 (NVFLKSKVANRFLQRTKR) are excised as a propeptide. In terms of domain architecture, Gla spans 41–86 (ANSLVEEFKSGNIERECIEERCSKEEAREVFEDDEKTETFWNVYVD). 10 positions are modified to 4-carboxyglutamate: Glu-46, Glu-47, Glu-54, Glu-56, Glu-59, Glu-60, Glu-65, Glu-66, Glu-69, and Glu-72. A disulfide bond links Cys-57 and Cys-62. Residues 86–122 (DGDQCSSNPCHYRGICKDGIGSYTCTCLSGYEGKNCE) enclose the EGF-like 1; calcium-binding domain. Cystine bridges form between Cys-90–Cys-101, Cys-95–Cys-110, Cys-112–Cys-121, Cys-129–Cys-140, Cys-136–Cys-149, Cys-151–Cys-164, Cys-172–Cys-329, Cys-216–Cys-221, Cys-236–Cys-252, Cys-377–Cys-391, and Cys-402–Cys-430. Ser-92 is a glycosylation site (O-linked (Hex...) serine). One can recognise an EGF-like 2 domain in the interval 129 to 164 (CRVDNGNCWHFCKSVQNDIQCSCAEGYLLGEDGHSC). The propeptide at 182–209 (REASLPDFVQSHNATLLKKSDNPSPDIR) is activation peptide. A Peptidase S1 domain is found at 210 to 454 (IVNGMDCKLG…FIPWIKRIMR (245 aa)). The active-site Charge relay system is the His-251. An N-linked (GlcNAc...) asparagine glycan is attached at Asn-254. Residue Asp-309 is the Charge relay system of the active site. Ser-406 functions as the Charge relay system in the catalytic mechanism.

It belongs to the peptidase S1 family. Snake venom subfamily. Heterodimer of a light and a heavy chains; disulfide-linked. Is associated with pseutarin-C non-catalytic subunit (AC Q7SZN0) in a non-covalent manner. Post-translationally, gamma-carboxyglutamate residues are formed by vitamin K dependent carboxylation. These residues are essential for the binding of calcium. In terms of tissue distribution, expressed by the venom gland.

Its subcellular location is the secreted. It carries out the reaction Selective cleavage of Arg-|-Thr and then Arg-|-Ile bonds in prothrombin to form thrombin.. With respect to regulation, activated by calcium and negatively charged phospholipids. Functionally, snake prothrombin activator that attacks the hemostatic system of prey. This non-catalytic subunit is functionally similar to blood coagulation factor V. It serves as a critical cofactor for the prothrombinase activity of the catalytic subunit, which is similar to the blood coagulation factor X. The complex converts prothrombin to thrombin by sequential cleavage at two positions, Arg-320 followed by Arg-271. Cleavage at Arg-320 produces an active intermediate known as meizothrombin. Meizothrombin is the 'second' substrate for prothrombinase, and it docks in an altered manner to present the second cleavage site (271). Cleavage at Arg-271 releases active thrombin from its pro-fragment. This order of events is reversed if the protease component of prothrombinase is used on its own, suggesting that the 271 site is inherently more accessible to proteolysis. The complex converts prothrombin to thrombin in presence but also in the absence of membrane. In Pseudonaja textilis (Eastern brown snake), this protein is Venom prothrombin activator pseutarin-C catalytic subunit.